A 512-amino-acid polypeptide reads, in one-letter code: Reduced folate transporter (512 aa).

An N-acetylmethionine modification is found at methionine 1. Over 1–29 (MVPTGQVAEKQAYEEPRQDHELKSWRCLV) the chain is Cytoplasmic. A helical transmembrane segment spans residues 30-50 (FYLCFFGFMAQLRPGESFITP). 2 residues coordinate folate: isoleucine 48 and threonine 49. Topologically, residues 51 to 62 (FLLERKFTKEQV) are extracellular. A helical membrane pass occupies residues 63-85 (TNEIIPMLPYSHLAVLVPVFLLT). Over 86 to 89 (DYLR) the chain is Cytoplasmic. Residues 90–110 (YKPVLVLQCLSFVCVWLLLLL) form a helical membrane-spanning segment. Residues 111–114 (GTSV) lie on the Extracellular side of the membrane. A helical transmembrane segment spans residues 115–137 (VHMQLMEVFYSVTMAARIAYSSY). Folate contacts are provided by glutamate 121 and arginine 131. The Cytoplasmic segment spans residues 138–151 (IFSLVHPSRYQRMA). Residues 152 to 176 (SYSRAAVLLGVFISSVLGQALVTVG) traverse the membrane as a helical segment. A folate-binding site is contributed by valine 162. Topologically, residues 177–181 (HISTY) are extracellular. Residues 182 to 200 (TLNCVSLGFILFSLVLSLF) traverse the membrane as a helical segment. Residues 201 to 266 (LKRPKRSLFF…ELVENARQPQ (66 aa)) are Cytoplasmic-facing. The helical transmembrane segment at 267–292 (LRLWCLWWVFNSSGYYLITYYVHVLW) threads the bilayer. Folate contacts are provided by tyrosine 281, tyrosine 282, and tyrosine 286. Residues 293-300 (RSTDSSLS) lie on the Extracellular side of the membrane. A helical membrane pass occupies residues 301-323 (YNGAVDAASTLLSAITSFSAGFL). At 324 to 329 (SIRWTL) the chain is on the cytoplasmic side. Residues 330 to 350 (WSKLVIAGVIAIQASLVFCMF) traverse the membrane as a helical segment. The Extracellular portion of the chain corresponds to 351 to 353 (QIR). The helical transmembrane segment at 354 to 377 (DIWVCYVTFVLFRGAYQFLVPIAT) threads the bilayer. Arginine 366 and glutamine 370 together coordinate folate. At 378–391 (FQIASSLSKELCAL) the chain is on the cytoplasmic side. The helical transmembrane segment at 392–415 (VFGINTFLATALKTCITLVVSDKR) threads the bilayer. Positions 400–412 (ATALKTCITLVVS) are required for substrate-binding. The Extracellular portion of the chain corresponds to 416–423 (GLGLQVRD). A helical transmembrane segment spans residues 424 to 448 (QFRIYFIYFLMLSITCFAWAGLDGL). Residues 449–512 (RYCQRGRHQP…RGDLRVEAKA (64 aa)) lie on the Cytoplasmic side of the membrane. Residues serine 467, serine 472, and serine 477 each carry the phosphoserine modification. Residues 478-512 (LQDGDLRGPQPSAPQLLSEDGMEDDRGDLRVEAKA) form a disordered region.

The protein belongs to the reduced folate carrier (RFC) transporter (TC 2.A.48) family.

It is found in the cell membrane. The protein resides in the apical cell membrane. It localises to the basolateral cell membrane. It catalyses the reaction 5-amino-1-(5-phospho-beta-D-ribosyl)imidazole-4-carboxamide(in) + (6S)-5-methyl-5,6,7,8-tetrahydrofolate(out) = 5-amino-1-(5-phospho-beta-D-ribosyl)imidazole-4-carboxamide(out) + (6S)-5-methyl-5,6,7,8-tetrahydrofolate(in). Its function is as follows. Antiporter that mediates the import of reduced folates, driven by the export of organic anions. Also acts as an importer of immunoreactive cyclic dinucleotides, but with a lower transporter activity. Mechanistically, acts as a secondary active transporter, which exports intracellular organic anions down their concentration gradients to facilitate the uptake of its substrates. Has high affinity for N5-methyltetrahydrofolate, the predominant circulating form of folate. Also mediates the import of antifolate drug methotrexate. 5-amino-4-imidazolecarboxamide riboside (AICAR), when phosphorylated to AICAR monophosphate, can serve as an organic anion for antiporter activity. The chain is Reduced folate transporter from Mus musculus (Mouse).